Reading from the N-terminus, the 467-residue chain is MIPITALKDKTVALFGLGGSGIATAKAIVAGGARIIAWDDNPDSVARAQSAGIATGDLRQADWSQFAVFVLSPGVPLTHPQPHWSVDLARAAGVEIIGDVELFVRERNHIAPDCPFIAITGTNGKSTTTALIAHIIKATGRDMQLGGNIGTAILTLEPPCADRFYVVECSSYQIDLAPSLNPTAGILLNLTPDHLDRHGSMENYAAIKERLVAASGTAIIGIDDAYCQAIADRLHGAGIRVVRISKEKHLDRGYFADGAKLLWAQDGEIDEIASLEGIGSLRGAHNAQNALAAIVACLSAGLSLEEIHAGLKSFPGLAHRMEQVGRRGKVLFVNDSKATNAEATAPALSSFPQNIYWIVGGVPKAGGINSLTAFFPRVAKAYLIGEAAAQFAATLGGAVPFEISDTLAAAVAHAAGDAGNDAAPEPVVLLSPACASFDQFQNFEKRGDAFRDAVLALPGVMPMRGGS.

Residue 121–127 (GTNGKST) participates in ATP binding.

The protein belongs to the MurCDEF family.

It localises to the cytoplasm. The enzyme catalyses UDP-N-acetyl-alpha-D-muramoyl-L-alanine + D-glutamate + ATP = UDP-N-acetyl-alpha-D-muramoyl-L-alanyl-D-glutamate + ADP + phosphate + H(+). The protein operates within cell wall biogenesis; peptidoglycan biosynthesis. In terms of biological role, cell wall formation. Catalyzes the addition of glutamate to the nucleotide precursor UDP-N-acetylmuramoyl-L-alanine (UMA). The protein is UDP-N-acetylmuramoylalanine--D-glutamate ligase of Brucella abortus (strain 2308).